The chain runs to 129 residues: Succinate dehydrogenase subunit 3-2, mitochondrial (129 aa).

The N-terminal 58 residues, methionine 1–arginine 58, are a transit peptide targeting the mitochondrion. The segment covering serine 27–proline 53 has biased composition (polar residues). Positions serine 27–asparagine 66 are disordered. Residue histidine 87 coordinates heme. A helical membrane pass occupies residues isoleucine 105–phenylalanine 127.

Component of complex II composed of eight subunits in plants: four classical SDH subunits SDH1, SDH2, SDH3 and SDH4 (a flavoprotein (FP), an iron-sulfur protein (IP), and a cytochrome b composed of a large and a small subunit.), as well as four subunits unknown in mitochondria from bacteria and heterotrophic eukaryotes. Heme is required as a cofactor.

The protein localises to the mitochondrion inner membrane. It functions in the pathway carbohydrate metabolism; tricarboxylic acid cycle. Functionally, membrane-anchoring subunit of succinate dehydrogenase (SDH). This chain is Succinate dehydrogenase subunit 3-2, mitochondrial, found in Oryza sativa subsp. japonica (Rice).